Consider the following 88-residue polypeptide: uncharacterized protein (88 aa).

Residues 1 to 54 form a disordered region; it reads AVDAYDDDDNLKNEEGDYYNESDDGYSGDEEEEEKQEEDEQDDDDLQFDDGVPE. Over residues 16–53 the composition is skewed to acidic residues; the sequence is GDYYNESDDGYSGDEEEEEKQEEDEQDDDDLQFDDGVP.

In terms of tissue distribution, predominantly in developing fruit.

This is an uncharacterized protein from Fragaria ananassa (Strawberry).